The chain runs to 434 residues: NADH-quinone oxidoreductase subunit F 1 (434 aa).

54-63 contacts NAD(+); the sequence is GRGGAGFPTG. Residue 166-213 coordinates FMN; it reads GAGAYICGEETALLESLEGKKGQPRLKPPFPANMGLYGCPTTVNNVES. [4Fe-4S] cluster contacts are provided by Cys-345, Cys-348, Cys-351, and Cys-391.

This sequence belongs to the complex I 51 kDa subunit family. The cofactor is FMN. It depends on [4Fe-4S] cluster as a cofactor.

It carries out the reaction a quinone + NADH + 5 H(+)(in) = a quinol + NAD(+) + 4 H(+)(out). Functionally, NDH-1 shuttles electrons from NADH, via FMN and iron-sulfur (Fe-S) centers, to quinones in the respiratory chain. The immediate electron acceptor for the enzyme in this species is believed to be ubiquinone. Couples the redox reaction to proton translocation (for every two electrons transferred, four hydrogen ions are translocated across the cytoplasmic membrane), and thus conserves the redox energy in a proton gradient. The chain is NADH-quinone oxidoreductase subunit F 1 (nuoF1) from Rhizobium meliloti (strain 1021) (Ensifer meliloti).